The sequence spans 69 residues: uncharacterized protein (69 aa).

Topologically, residues 1–15 (MLLYIVIIVACIISK) are cytoplasmic. The helical transmembrane segment at 16-36 (LVPNEYWAIHLFFIIMIFMVY) threads the bilayer. At 37-69 (MYEKLDIHQKYQFWNYTMSGLSGHNVQITCKCY) the chain is on the extracellular side. An N-linked (GlcNAc...) asparagine; by host glycan is attached at N51.

It belongs to the asfivirus X69R family.

The protein resides in the host membrane. This is an uncharacterized protein from Ornithodoros (relapsing fever ticks).